The following is a 132-amino-acid chain: Small ribosomal subunit protein uS11 (132 aa).

This sequence belongs to the universal ribosomal protein uS11 family. As to quaternary structure, part of the 30S ribosomal subunit. Interacts with proteins S7 and S18. Binds to IF-3.

Functionally, located on the platform of the 30S subunit, it bridges several disparate RNA helices of the 16S rRNA. Forms part of the Shine-Dalgarno cleft in the 70S ribosome. This chain is Small ribosomal subunit protein uS11, found in Bifidobacterium animalis subsp. lactis (strain AD011).